Reading from the N-terminus, the 424-residue chain is Elongator complex protein 4 (424 aa).

Belongs to the ELP4 family. Component of the elongator complex which consists of ELP1, ELP2, ELP3, ELP4, ELP5 and ELP6. In terms of tissue distribution, widely expressed.

It is found in the cytoplasm. The protein localises to the nucleus. The protein operates within tRNA modification; 5-methoxycarbonylmethyl-2-thiouridine-tRNA biosynthesis. Component of the elongator complex which is required for multiple tRNA modifications, including mcm5U (5-methoxycarbonylmethyl uridine), mcm5s2U (5-methoxycarbonylmethyl-2-thiouridine), and ncm5U (5-carbamoylmethyl uridine). The elongator complex catalyzes the formation of carboxymethyluridine in the wobble base at position 34 in tRNAs. This is Elongator complex protein 4 (ELP4) from Homo sapiens (Human).